The primary structure comprises 79 residues: Cell division protein ZapB (79 aa).

The stretch at 4–78 forms a coiled coil; that stretch reads EVFEKLEAKV…LRALLGKMEE (75 aa).

The protein belongs to the ZapB family. In terms of assembly, homodimer. The ends of the coiled-coil dimer bind to each other, forming polymers. Interacts with FtsZ.

Its subcellular location is the cytoplasm. Functionally, non-essential, abundant cell division factor that is required for proper Z-ring formation. It is recruited early to the divisome by direct interaction with FtsZ, stimulating Z-ring assembly and thereby promoting cell division earlier in the cell cycle. Its recruitment to the Z-ring requires functional FtsA or ZipA. This is Cell division protein ZapB from Erwinia tasmaniensis (strain DSM 17950 / CFBP 7177 / CIP 109463 / NCPPB 4357 / Et1/99).